Here is a 397-residue protein sequence, read N- to C-terminus: Vacuolar protein sorting-associated protein 37A (397 aa).

The tract at residues 1-22 (MSWLFPLTKSASSSAAGSPGGL) is disordered. Residue Ser18 is modified to Phosphoserine. A VPS37 C-terminal domain is found at 308-397 (KSTFEKKMQR…AMHSQFHAPL (90 aa)).

This sequence belongs to the VPS37 family. In terms of assembly, component of the ESCRT-I complex (endosomal sorting complex required for transport I) which consists of TSG101, VPS28, a VPS37 protein (VPS37A to -D) and MVB12A or MVB12B in a 1:1:1:1 stoichiometry. Interacts with TSG101, VPS28 and HGS. Component of an ESCRT-I complex (endosomal sorting complex required for transport I) which consists of TSG101, VPS28, VPS37A and UBAP1 in a 1:1:1:1 stoichiometry. In terms of tissue distribution, widely expressed. Examined tissues include heart, brain, placenta, liver, skeletal muscle, kidney and pancreas. More abundant in liver. Strongly decreased or undetected in hepatomas.

Its subcellular location is the late endosome membrane. It localises to the nucleus. In terms of biological role, component of the ESCRT-I complex, a regulator of vesicular trafficking process. Required for the sorting of endocytic ubiquitinated cargos into multivesicular bodies. May be involved in cell growth and differentiation. The sequence is that of Vacuolar protein sorting-associated protein 37A (VPS37A) from Homo sapiens (Human).